A 412-amino-acid polypeptide reads, in one-letter code: MQMITLAQQAKIASVELAQFGNVQKNQALLTIAQQLEQRSAEILAANAKDIEFAKNQGISTAIIDRLLLNESRLQGIANDVRNVAKLADPVGQVIDGGVLNSGLKIERQRVPLGVILTIYEARPNVTIDVASLCLKTGNAVILRGGKETKFTNAVLVEVVQQALETAGLPKLAVQAVTDPDRVLLLELLKLDRYIDMVIPRGGAGLHQFCKENSTIPVIVGGIGVCHMFVEKSADQQKALELIANAKTQRPSTCNTLETLLVEKAIAGEFLPKLANRMKALDVTLHTDDLQKTEGIEPLDDARMRQEWLSLDLNVVVIDNLTKAVEHIREYGSQHSEAILTSDYQLARQFVAQVDAAAVYINASTRFTDGGEFGLGAEVAVSTQKLHARGPMGLEALTTYKWVCEGDYLVRK.

This sequence belongs to the gamma-glutamyl phosphate reductase family.

It is found in the cytoplasm. It carries out the reaction L-glutamate 5-semialdehyde + phosphate + NADP(+) = L-glutamyl 5-phosphate + NADPH + H(+). It functions in the pathway amino-acid biosynthesis; L-proline biosynthesis; L-glutamate 5-semialdehyde from L-glutamate: step 2/2. Functionally, catalyzes the NADPH-dependent reduction of L-glutamate 5-phosphate into L-glutamate 5-semialdehyde and phosphate. The product spontaneously undergoes cyclization to form 1-pyrroline-5-carboxylate. This chain is Gamma-glutamyl phosphate reductase, found in Actinobacillus pleuropneumoniae serotype 7 (strain AP76).